A 124-amino-acid chain; its full sequence is Fluoride-specific ion channel FluC (124 aa).

4 helical membrane passes run 4 to 24, 35 to 55, 62 to 82, and 95 to 115; these read LLFVALGGSIGAVLRYLMSII, FGTLLVNVLGSFFMGIVYALG, PELKALVGVGLLGALTTFSTF, and WFKSLINVLLNVSLCIFMVYL. The Na(+) site is built by Gly74 and Thr77.

This sequence belongs to the fluoride channel Fluc/FEX (TC 1.A.43) family.

It localises to the cell inner membrane. The enzyme catalyses fluoride(in) = fluoride(out). Na(+) is not transported, but it plays an essential structural role and its presence is essential for fluoride channel function. Fluoride-specific ion channel. Important for reducing fluoride concentration in the cell, thus reducing its toxicity. The polypeptide is Fluoride-specific ion channel FluC (Shewanella denitrificans (strain OS217 / ATCC BAA-1090 / DSM 15013)).